Here is a 315-residue protein sequence, read N- to C-terminus: Methionyl-tRNA formyltransferase (315 aa).

113 to 116 (SLLP) provides a ligand contact to (6S)-5,6,7,8-tetrahydrofolate.

It belongs to the Fmt family.

The catalysed reaction is L-methionyl-tRNA(fMet) + (6R)-10-formyltetrahydrofolate = N-formyl-L-methionyl-tRNA(fMet) + (6S)-5,6,7,8-tetrahydrofolate + H(+). Its function is as follows. Attaches a formyl group to the free amino group of methionyl-tRNA(fMet). The formyl group appears to play a dual role in the initiator identity of N-formylmethionyl-tRNA by promoting its recognition by IF2 and preventing the misappropriation of this tRNA by the elongation apparatus. The polypeptide is Methionyl-tRNA formyltransferase (Klebsiella pneumoniae subsp. pneumoniae (strain ATCC 700721 / MGH 78578)).